Reading from the N-terminus, the 192-residue chain is Fe/S biogenesis protein NfuA (192 aa).

[4Fe-4S] cluster is bound by residues cysteine 149 and cysteine 152.

The protein belongs to the NfuA family. Homodimer. [4Fe-4S] cluster is required as a cofactor.

Functionally, involved in iron-sulfur cluster biogenesis. Binds a 4Fe-4S cluster, can transfer this cluster to apoproteins, and thereby intervenes in the maturation of Fe/S proteins. Could also act as a scaffold/chaperone for damaged Fe/S proteins. This chain is Fe/S biogenesis protein NfuA, found in Shewanella amazonensis (strain ATCC BAA-1098 / SB2B).